The sequence spans 55 residues: Neurotoxin BmKX-A1-S31 (55 aa).

Residues 1–23 (MKIFFAVLVILVLFSMLIWTAYG) form the signal peptide. 3 disulfide bridges follow: cysteine 30–cysteine 45, cysteine 36–cysteine 50, and cysteine 39–cysteine 53.

Expressed by the venom gland.

It is found in the secreted. The chain is Neurotoxin BmKX-A1-S31 from Olivierus martensii (Manchurian scorpion).